The following is a 238-amino-acid chain: Ankyrin repeat domain-containing protein 49 (238 aa).

Residues 38–57 (TGTQSLWVGNSDEDEEQEEK) are disordered. Residue S48 is modified to Phosphoserine. Residues 48–57 (SDEDEEQEEK) are compositionally biased toward acidic residues. 4 ANK repeats span residues 72-105 (DPSKLLLWAAEKNRLATVQRLLSEKAAEVNTRDE), 106-135 (DEYTPLHRAAYSGHIDVVRELVAKGADVHA), 139-168 (DGWTPLHSACKWNNTKVASFLLQHDADINA), and 172-205 (GLLTPLHLAAGNRDSRDTLELLLMNRYIKPELKN).

In terms of tissue distribution, expressed in spermatogonia, spermatocytes and round spermatids.

The protein resides in the nucleus. Functionally, may have a role in spermatogenesis where it promotes autophagy in response to serum starvation, via the NF-kappaB pathway. This Mus musculus (Mouse) protein is Ankyrin repeat domain-containing protein 49 (Ankrd49).